Reading from the N-terminus, the 437-residue chain is Ribosomal protein uS12 methylthiotransferase RimO (437 aa).

An MTTase N-terminal domain is found at P5–T116. Positions 14, 50, 79, 154, 158, and 161 each coordinate [4Fe-4S] cluster. The region spanning T140–K369 is the Radical SAM core domain. Residues Q372–I437 enclose the TRAM domain.

It belongs to the methylthiotransferase family. RimO subfamily. It depends on [4Fe-4S] cluster as a cofactor.

It localises to the cytoplasm. It catalyses the reaction L-aspartate(89)-[ribosomal protein uS12]-hydrogen + (sulfur carrier)-SH + AH2 + 2 S-adenosyl-L-methionine = 3-methylsulfanyl-L-aspartate(89)-[ribosomal protein uS12]-hydrogen + (sulfur carrier)-H + 5'-deoxyadenosine + L-methionine + A + S-adenosyl-L-homocysteine + 2 H(+). Its function is as follows. Catalyzes the methylthiolation of an aspartic acid residue of ribosomal protein uS12. In Crocosphaera subtropica (strain ATCC 51142 / BH68) (Cyanothece sp. (strain ATCC 51142)), this protein is Ribosomal protein uS12 methylthiotransferase RimO.